Consider the following 141-residue polypeptide: ATP synthase epsilon chain (141 aa).

The protein belongs to the ATPase epsilon chain family. F-type ATPases have 2 components, CF(1) - the catalytic core - and CF(0) - the membrane proton channel. CF(1) has five subunits: alpha(3), beta(3), gamma(1), delta(1), epsilon(1). CF(0) has three main subunits: a, b and c.

Its subcellular location is the cell inner membrane. In terms of biological role, produces ATP from ADP in the presence of a proton gradient across the membrane. The chain is ATP synthase epsilon chain from Chromohalobacter salexigens (strain ATCC BAA-138 / DSM 3043 / CIP 106854 / NCIMB 13768 / 1H11).